The sequence spans 60 residues: Large ribosomal subunit protein uL30 (60 aa).

The protein belongs to the universal ribosomal protein uL30 family. Part of the 50S ribosomal subunit.

The polypeptide is Large ribosomal subunit protein uL30 (Streptomyces avermitilis (strain ATCC 31267 / DSM 46492 / JCM 5070 / NBRC 14893 / NCIMB 12804 / NRRL 8165 / MA-4680)).